The sequence spans 959 residues: ATP-dependent 6-phosphofructokinase subunit beta (959 aa).

Residues 2–573 form an N-terminal catalytic PFK domain 1 region; it reads TVTTPFVNGT…HLNNFMAINS (572 aa). The tract at residues 144-167 is disordered; that stretch reads KNAVSTKPTPPPAPEASAESGLSS. T152 is subject to Phosphothreonine. Positions 158–167 are enriched in low complexity; that stretch reads EASAESGLSS. 2 positions are modified to phosphoserine: S163 and S171. ATP is bound by residues G206, 270–271, and 300–303; these read RC and GDGS. Residue D301 participates in Mg(2+) binding. Beta-D-fructose 6-phosphate is bound by residues 346–348, R383, 390–392, E447, R475, and 481–484; these read SID, MGR, and HVQR. Residue D348 is the Proton acceptor of the active site. The tract at residues 574–587 is interdomain linker; it reads ADHNEPKLPKDKRL. The tract at residues 588–959 is C-terminal regulatory PFK domain 2; sequence KIAIVNVGAP…DHLVGRKRVD (372 aa). Residues R658, 716-720, R754, and 761-763 contribute to the beta-D-fructose 2,6-bisphosphate site; these read TLSNN and QGG. Position 803 is a phosphoserine (S803). Residues K847, 853–856, and R935 contribute to the beta-D-fructose 2,6-bisphosphate site; that span reads HVQQ.

This sequence belongs to the phosphofructokinase type A (PFKA) family. ATP-dependent PFK group I subfamily. Eukaryotic two domain clade 'E' sub-subfamily. In terms of assembly, heterooctamer of 4 alpha and 4 beta chains. It depends on Mg(2+) as a cofactor.

The protein localises to the cytoplasm. It localises to the mitochondrion outer membrane. It carries out the reaction beta-D-fructose 6-phosphate + ATP = beta-D-fructose 1,6-bisphosphate + ADP + H(+). Its pathway is carbohydrate degradation; glycolysis; D-glyceraldehyde 3-phosphate and glycerone phosphate from D-glucose: step 3/4. With respect to regulation, allosterically activated by ADP, AMP, or fructose 2,6-bisphosphate, and allosterically inhibited by ATP or citrate. In terms of biological role, catalyzes the phosphorylation of D-fructose 6-phosphate to fructose 1,6-bisphosphate by ATP, the first committing step of glycolysis. This is ATP-dependent 6-phosphofructokinase subunit beta (PFK2) from Saccharomyces cerevisiae (strain ATCC 204508 / S288c) (Baker's yeast).